Reading from the N-terminus, the 72-residue chain is Large ribosomal subunit protein bL31 (72 aa).

4 residues coordinate Zn(2+): Cys16, Cys18, Cys38, and Cys41.

Belongs to the bacterial ribosomal protein bL31 family. Type A subfamily. Part of the 50S ribosomal subunit. The cofactor is Zn(2+).

In terms of biological role, binds the 23S rRNA. This Vibrio cholerae serotype O1 (strain ATCC 39541 / Classical Ogawa 395 / O395) protein is Large ribosomal subunit protein bL31.